Here is a 1327-residue protein sequence, read N- to C-terminus: Putative ATP-dependent RNA helicase ucp12 (1327 aa).

2 disordered regions span residues 1–58 and 201–222; these read MGSK…KQLV and QAAR…NEKV. Residues 18-41 show a composition bias toward basic and acidic residues; the sequence is SKNKEKNIKGKKKNSLDPIEKNKQ. Polar residues predominate over residues 42-58; that stretch reads ETAGLQTTSRPTAKQLV. The region spanning 276–315 is the UBA domain; the sequence is EPDTSIVNDLISLGFRDIHAKEACQYCVSLEDALEWLIIH. The region spanning 405-504 is the RWD domain; the sequence is DDVSALQSIL…NHLQENIEDF (100 aa). Residues 587–756 form the Helicase ATP-binding domain; the sequence is MDAIQHSQVV…FGNAGHLHIH (170 aa). 600–607 contacts ATP; the sequence is GETGSGKS. Residues 703-706 carry the DEAH box motif; it reads DEVH. Residues 797–968 enclose the Helicase C-terminal domain; the sequence is LISRLVSSID…QVCLNVVPLV (172 aa).

The protein belongs to the DEAD box helicase family. DEAH subfamily.

The protein resides in the cytoplasm. The catalysed reaction is ATP + H2O = ADP + phosphate + H(+). Its function is as follows. Probable ATP-binding RNA helicase. The polypeptide is Putative ATP-dependent RNA helicase ucp12 (ucp12) (Schizosaccharomyces pombe (strain 972 / ATCC 24843) (Fission yeast)).